The following is a 442-amino-acid chain: Syndecan-3 (442 aa).

Disordered regions lie at residues 1–25 and 55–85; these read MKPG…GPGA and RPVD…SGYF. The signal sequence occupies residues 1–44; the sequence is MKPGPPRRGTAQGQRVDTATHGPGARGLLLPPLLLLLLAGRAAG. Residues 45–387 lie on the Extracellular side of the membrane; that stretch reads AQRWRNENFE…SILERKEVLV (343 aa). Over residues 61-75 the composition is skewed to acidic residues; sequence GSGDDDSFPDDELDD. O-linked (Xyl...) (glycosaminoglycan) serine glycosylation is found at Ser78, Ser80, Ser82, and Ser89. O-linked (GalNAc) threonine; by GALNT13 glycosylation occurs at Thr107. Disordered stretches follow at residues 151–175, 180–199, 225–244, 252–327, and 339–372; these read EEPS…TGAP, APAT…PATA, ATTP…DTEA, TATS…TTQP, and AAAK…SSAA. The span at 157–175 shows a compositional bias: low complexity; sequence ATTISTTTSTTAATTTGAP. Ser161 is a glycosylation site (O-linked (GalNAc) serine; by GALNT13). O-linked (GalNAc) threonine; by GALNT13 glycosylation is found at Thr162, Thr163, Thr170, and Thr172. Over residues 276-287 the composition is skewed to low complexity; that stretch reads TLPLGTTAPGPT. Polar residues predominate over residues 289–303; sequence VAQTPTPESLLTTTQ. Ser315 and Ser367 each carry an O-linked (Xyl...) (glycosaminoglycan) serine glycan. Residues 388-408 form a helical membrane-spanning segment; that stretch reads AVIVGGVVGALFAAFLVTLLI. Residues Tyr409, Tyr419, Tyr431, and Tyr441 each carry the phosphotyrosine modification. The Cytoplasmic portion of the chain corresponds to 409 to 442; sequence YRMKKKDEGSYTLEEPKQASVTYQKPDKQEEFYA. Residues 419-442 are disordered; that stretch reads YTLEEPKQASVTYQKPDKQEEFYA. Positions 433–442 are enriched in basic and acidic residues; sequence KPDKQEEFYA.

Belongs to the syndecan proteoglycan family. Interacts with TIAM1. Interacts (via heparan sulfate chains) with PTN; this interaction mediates the neurite outgrowth-promoting signal from PTN to the cytoskeleton of growing neurites; this interaction mediates osteoblast recruitment. Interacts with MDK; this interaction induces SDC3 clustering; this interaction induces neuronal cell adhesion and neurite outgrowth. In terms of processing, O-glycosylated within the Thr/Ser-rich region which could interact with lectin domains on other molecules. In terms of tissue distribution, high levels in neonatal brain, heart, and Schwann cells, barely detectable in neonatal or adult liver, or adult brain.

The protein localises to the cell membrane. In terms of biological role, cell surface proteoglycan that may bear heparan sulfate. May have a role in the organization of cell shape by affecting the actin cytoskeleton, possibly by transferring signals from the cell surface in a sugar-dependent mechanism. The chain is Syndecan-3 (Sdc3) from Rattus norvegicus (Rat).